The primary structure comprises 153 residues: SsrA-binding protein (153 aa).

Positions 132-153 are disordered; the sequence is REKDWLRERERVMKHDTRRRSD.

Belongs to the SmpB family.

The protein localises to the cytoplasm. Its function is as follows. Required for rescue of stalled ribosomes mediated by trans-translation. Binds to transfer-messenger RNA (tmRNA), required for stable association of tmRNA with ribosomes. tmRNA and SmpB together mimic tRNA shape, replacing the anticodon stem-loop with SmpB. tmRNA is encoded by the ssrA gene; the 2 termini fold to resemble tRNA(Ala) and it encodes a 'tag peptide', a short internal open reading frame. During trans-translation Ala-aminoacylated tmRNA acts like a tRNA, entering the A-site of stalled ribosomes, displacing the stalled mRNA. The ribosome then switches to translate the ORF on the tmRNA; the nascent peptide is terminated with the 'tag peptide' encoded by the tmRNA and targeted for degradation. The ribosome is freed to recommence translation, which seems to be the essential function of trans-translation. The sequence is that of SsrA-binding protein from Bordetella avium (strain 197N).